The chain runs to 739 residues: Phosphoribosylformylglycinamidine synthase subunit PurL (739 aa).

Histidine 54 is an active-site residue. ATP is bound by residues tyrosine 57 and lysine 96. Glutamate 98 lines the Mg(2+) pocket. Residues serine 99–histidine 102 and arginine 121 contribute to the substrate site. Catalysis depends on histidine 100, which acts as the Proton acceptor. Mg(2+) is bound at residue aspartate 122. Substrate is bound at residue glutamine 245. Aspartate 273 provides a ligand contact to Mg(2+). Glutamate 317–glutamine 319 serves as a coordination point for substrate. Residues aspartate 500 and glycine 537 each contribute to the ATP site. Mg(2+) is bound at residue asparagine 538. Substrate is bound at residue serine 540.

The protein belongs to the FGAMS family. In terms of assembly, monomer. Part of the FGAM synthase complex composed of 1 PurL, 1 PurQ and 2 PurS subunits.

The protein localises to the cytoplasm. The catalysed reaction is N(2)-formyl-N(1)-(5-phospho-beta-D-ribosyl)glycinamide + L-glutamine + ATP + H2O = 2-formamido-N(1)-(5-O-phospho-beta-D-ribosyl)acetamidine + L-glutamate + ADP + phosphate + H(+). It functions in the pathway purine metabolism; IMP biosynthesis via de novo pathway; 5-amino-1-(5-phospho-D-ribosyl)imidazole from N(2)-formyl-N(1)-(5-phospho-D-ribosyl)glycinamide: step 1/2. Functionally, part of the phosphoribosylformylglycinamidine synthase complex involved in the purines biosynthetic pathway. Catalyzes the ATP-dependent conversion of formylglycinamide ribonucleotide (FGAR) and glutamine to yield formylglycinamidine ribonucleotide (FGAM) and glutamate. The FGAM synthase complex is composed of three subunits. PurQ produces an ammonia molecule by converting glutamine to glutamate. PurL transfers the ammonia molecule to FGAR to form FGAM in an ATP-dependent manner. PurS interacts with PurQ and PurL and is thought to assist in the transfer of the ammonia molecule from PurQ to PurL. The chain is Phosphoribosylformylglycinamidine synthase subunit PurL from Bacillus mycoides (strain KBAB4) (Bacillus weihenstephanensis).